Consider the following 551-residue polypeptide: CTP synthase (551 aa).

Positions 1–267 (MSGTKYIFVT…DALVLEKLGL (267 aa)) are amidoligase domain. Serine 15 lines the CTP pocket. Position 15 (serine 15) interacts with UTP. An ATP-binding site is contributed by 16-21 (SIGKGT). Tyrosine 56 serves as a coordination point for L-glutamine. Residue aspartate 73 coordinates ATP. Aspartate 73 and glutamate 141 together coordinate Mg(2+). CTP is bound by residues 148-150 (DIE), 188-193 (KTKPTQ), and lysine 224. UTP-binding positions include 188 to 193 (KTKPTQ) and lysine 224. The Glutamine amidotransferase type-1 domain maps to 292-534 (RVAVIGKYIR…VGACLGAAEE (243 aa)). Glycine 355 is a binding site for L-glutamine. Residue cysteine 382 is the Nucleophile; for glutamine hydrolysis of the active site. L-glutamine-binding positions include 383 to 386 (LGMQ), glutamate 406, and arginine 462. Catalysis depends on residues histidine 507 and glutamate 509.

This sequence belongs to the CTP synthase family. In terms of assembly, homotetramer.

The enzyme catalyses UTP + L-glutamine + ATP + H2O = CTP + L-glutamate + ADP + phosphate + 2 H(+). The catalysed reaction is L-glutamine + H2O = L-glutamate + NH4(+). It carries out the reaction UTP + NH4(+) + ATP = CTP + ADP + phosphate + 2 H(+). The protein operates within pyrimidine metabolism; CTP biosynthesis via de novo pathway; CTP from UDP: step 2/2. With respect to regulation, allosterically activated by GTP, when glutamine is the substrate; GTP has no effect on the reaction when ammonia is the substrate. The allosteric effector GTP functions by stabilizing the protein conformation that binds the tetrahedral intermediate(s) formed during glutamine hydrolysis. Inhibited by the product CTP, via allosteric rather than competitive inhibition. Its function is as follows. Catalyzes the ATP-dependent amination of UTP to CTP with either L-glutamine or ammonia as the source of nitrogen. Regulates intracellular CTP levels through interactions with the four ribonucleotide triphosphates. This Rubrobacter xylanophilus (strain DSM 9941 / JCM 11954 / NBRC 16129 / PRD-1) protein is CTP synthase.